A 322-amino-acid polypeptide reads, in one-letter code: Pantothenate kinase (322 aa).

100–107 (GSVAVGKS) is a binding site for ATP.

This sequence belongs to the prokaryotic pantothenate kinase family.

The protein localises to the cytoplasm. It catalyses the reaction (R)-pantothenate + ATP = (R)-4'-phosphopantothenate + ADP + H(+). Its pathway is cofactor biosynthesis; coenzyme A biosynthesis; CoA from (R)-pantothenate: step 1/5. The polypeptide is Pantothenate kinase (Brucella abortus (strain 2308)).